Consider the following 1040-residue polypeptide: Probable starch synthase 4, chloroplastic/amyloplastic (1040 aa).

Residues 1–42 (MTTKLSSFCFLTHGLAGISCEREHGSSRRFFYLPSRRLVSTS) constitute a chloroplast transit peptide. The interval 43 to 142 (CKMRQQRGFD…KSKTAKKKGE (100 aa)) is disordered. Basic and acidic residues-rich tracts occupy residues 52–61 (DSSKRQEVKK) and 112–124 (NHAD…KDDI). The stretch at 187-466 (ELMTMIRSAE…EESKKKSRDE (280 aa)) forms a coiled coil. Lys556, Gly559, and Asp562 together coordinate ADP. Residues Trp679 and Gln680 each coordinate (1,4-alpha-D-glucosyl)n. Residues Arg849, Lys854, Lys906, Asp908, Tyr916, Leu933, and Thr934 each contribute to the ADP site.

It belongs to the glycosyltransferase 1 family. Bacterial/plant glycogen synthase subfamily. Interacts with PTST2. Interacts with PII1; the interaction is essential for the initiation of starch granules biosynthesis in leaf chloroplasts. In terms of tissue distribution, expressed in leaves and flowers.

The protein resides in the plastid. The protein localises to the chloroplast. It is found in the amyloplast. Its subcellular location is the chloroplast stroma. The catalysed reaction is [(1-&gt;4)-alpha-D-glucosyl](n) + ADP-alpha-D-glucose = [(1-&gt;4)-alpha-D-glucosyl](n+1) + ADP + H(+). The protein operates within glycan biosynthesis; starch biosynthesis. Functionally, probably involved in the priming of starch granule formation. May play a regulatory role in the control of starch accumulation in plastids. Is necessary and sufficient to establish the correct number of starch granules observed in chloroplasts. The polypeptide is Probable starch synthase 4, chloroplastic/amyloplastic (Arabidopsis thaliana (Mouse-ear cress)).